Here is a 456-residue protein sequence, read N- to C-terminus: PTS system sucrose-specific EIIBC component (456 aa).

The PTS EIIB type-1 domain occupies 4–87 (EQISRSLLPL…IQAAGISESS (84 aa)). The active-site Phosphocysteine intermediate; for EIIB activity is the Cys26. The region spanning 107–456 (RLLSNIFVPI…LTLKYKTDAE (350 aa)) is the PTS EIIC type-1 domain. 10 helical membrane-spanning segments follow: residues 112–132 (IFVP…LLGM), 144–164 (ALYI…PILI), 181–201 (TLGG…AAGF), 209–229 (IEVA…AVWF), 247–267 (LILT…LLIG), 288–308 (AGWL…ITGI), 329–349 (FLLP…FAVW), 360–380 (ITLP…IFGI), 388–408 (FIAA…MHVY), and 428–448 (LLNY…LSLT).

It is found in the cell inner membrane. It carries out the reaction N(pros)-phospho-L-histidyl-[protein](out) + sucrose = sucrose 6(G)-phosphate(in) + L-histidyl-[protein]. In terms of biological role, the phosphoenolpyruvate-dependent sugar phosphotransferase system (sugar PTS), a major carbohydrate active transport system, catalyzes the phosphorylation of incoming sugar substrates concomitantly with their translocation across the cell membrane. This system is involved in sucrose transport. This Klebsiella pneumoniae protein is PTS system sucrose-specific EIIBC component.